A 144-amino-acid polypeptide reads, in one-letter code: Ethylene-responsive transcription factor ERF019 (144 aa).

The segment at residues 13-72 (KYKGIRRRKWGKWVSEIRVPGTRDRLWLGSFSTAEGAAVAHDVAFFCLHQPDSLESLNFP) is a DNA-binding region (AP2/ERF).

The protein belongs to the AP2/ERF transcription factor family. ERF subfamily.

The protein resides in the nucleus. Functionally, probably acts as a transcriptional activator. Binds to the GCC-box pathogenesis-related promoter element. May be involved in the regulation of gene expression by stress factors and by components of stress signal transduction pathways. The protein is Ethylene-responsive transcription factor ERF019 (ERF019) of Arabidopsis thaliana (Mouse-ear cress).